The primary structure comprises 358 residues: Mesaconyl-CoA hydratase (358 aa).

In terms of domain architecture, MaoC-like spans 44–148 (AHDPGLRLTH…TSSSRPQYGI (105 aa)).

Belongs to the enoyl-CoA hydratase/isomerase family.

The catalysed reaction is (2R,3S)-beta-methylmalyl-CoA = 2-methylfumaryl-CoA + H2O. Functionally, involved in the methylaspartate cycle. Catalyzes the reversible hydration of mesaconyl-CoA (2-methylfumaryl-CoA) to yield beta-methylmalyl-CoA ((2R,3S)-beta-methylmalyl-CoA). This chain is Mesaconyl-CoA hydratase, found in Haloarcula marismortui (strain ATCC 43049 / DSM 3752 / JCM 8966 / VKM B-1809) (Halobacterium marismortui).